The sequence spans 464 residues: Antithrombin-III (464 aa).

Residues 1 to 32 (MYSNVIGTVTSGKRKVYLLSLLLIGFWDCVTC) form the signal peptide. 2 cysteine pairs are disulfide-bonded: C40/C160 and C53/C127. T63 carries the phosphothreonine; by FAM20C modification. Residue S68 is modified to Phosphoserine; by FAM20C. W81 provides a ligand contact to heparin. An N-linked (GlcNAc...) asparagine glycan is attached at N128. R161 lines the heparin pocket. N167 is a glycosylation site (N-linked (GlcNAc...) asparagine). R177 contributes to the heparin binding site. N187 is a glycosylation site (N-linked (GlcNAc...) (complex) asparagine). A glycan (N-linked (GlcNAc...) asparagine) is linked at N224. C279 and C462 are joined by a disulfide.

It belongs to the serpin family. In terms of assembly, forms protease inhibiting heterodimer with TMPRSS7. In terms of processing, phosphorylated by FAM20C in the extracellular medium. In terms of tissue distribution, found in plasma.

It localises to the secreted. It is found in the extracellular space. Its function is as follows. Most important serine protease inhibitor in plasma that regulates the blood coagulation cascade. AT-III inhibits thrombin, matriptase-3/TMPRSS7, as well as factors IXa, Xa and XIa. Its inhibitory activity is greatly enhanced in the presence of heparin. The chain is Antithrombin-III (SERPINC1) from Homo sapiens (Human).